Reading from the N-terminus, the 620-residue chain is Rhamnogalacturonan endolyase YesW (620 aa).

An N-terminal signal peptide occupies residues 1–37 (MRRSCLMIRRRKRMFTAVTLLVLLVMGTSVCPVKAEG). A disordered region spans residues 133 to 152 (LDKPAGGTTPKGESYTYSAN). N152 is a binding site for substrate. The Ca(2+) site is built by D153, D158, D160, D162, Q164, and E166. D172 lines the substrate pocket. A carbohydrate is bound by residues D187 and K207. Residues D222, D224, D226, K228, and E230 each contribute to the Ca(2+) site. 2 residues coordinate a carbohydrate: G238 and R255. H363, D369, D371, D373, K375, E377, D386, H387, H399, D401, D407, D409, R412, G414, E416, and E422 together coordinate Ca(2+). R452 is a substrate binding site. Residues D457, D459, Y462, G464, E466, D496, D498, L500, and E502 each coordinate Ca(2+). Position 532–534 (532–534 (NGT)) interacts with substrate. Ca(2+)-binding residues include D543, L545, D547, R549, E551, N592, and A594. Y595 contributes to the substrate binding site. N596 contributes to the Ca(2+) binding site.

It belongs to the polysaccharide lyase 11 family. In terms of assembly, monomer. Requires Ca(2+) as cofactor. Mn(2+) serves as cofactor.

It is found in the secreted. It catalyses the reaction Endotype eliminative cleavage of L-alpha-rhamnopyranosyl-(1-&gt;4)-alpha-D-galactopyranosyluronic acid bonds of rhamnogalacturonan I domains in ramified hairy regions of pectin leaving L-rhamnopyranose at the reducing end and 4-deoxy-4,5-unsaturated D-galactopyranosyluronic acid at the non-reducing end.. In terms of biological role, pectinolytic enzyme that degrades type I rhamnogalacturonan from plant cell walls and releases oligosaccharide products. Degrades rhamnogalacturonan, polygalacturonic acid, pectic acid and pectin. The polypeptide is Rhamnogalacturonan endolyase YesW (yesW) (Bacillus subtilis (strain 168)).